The sequence spans 184 residues: Uroplakin-2 (184 aa).

The signal sequence occupies residues 1-25 (MASTLPVQTLPLILILLAVLAPGTA). Positions 26–84 (DFNISSLSGLLSPALTESLLIALPPCHLTGGNATLMVRRANDSKVVKSDFVVPPCRGRR) are excised as a propeptide. 3 N-linked (GlcNAc...) asparagine glycosylation sites follow: N28, N57, and N66. Residues 85–155 (ELVSVVDSGS…IGLGMARTGG (71 aa)) lie on the Lumenal side of the membrane. A helical transmembrane segment spans residues 156–180 (MVVITVLLSVAMFLLVVGLIVALHW). Residues 181 to 184 (DARK) are Cytoplasmic-facing.

Belongs to the uroplakin-2 family. In terms of assembly, interacts with uroplakin-1a (UPK1A).

It localises to the cell membrane. In terms of biological role, component of the asymmetric unit membrane (AUM); a highly specialized biomembrane elaborated by terminally differentiated urothelial cells. May play an important role in regulating the assembly of the AUM. In Mus musculus (Mouse), this protein is Uroplakin-2 (Upk2).